The sequence spans 263 residues: 4-hydroxy-2-oxo-heptane-1,7-dioate aldolase (263 aa).

Residue His45 is the Proton acceptor of the active site. Gln147 provides a ligand contact to substrate. Glu149 contacts a divalent metal cation. Substrate contacts are provided by Ala174 and Asp175. Position 175 (Asp175) interacts with a divalent metal cation.

The protein belongs to the HpcH/HpaI aldolase family. As to quaternary structure, homohexamer; trimer of dimers. A divalent metal cation serves as cofactor.

The catalysed reaction is 4-hydroxy-2-oxoheptanedioate = succinate semialdehyde + pyruvate. It functions in the pathway aromatic compound metabolism; 4-hydroxyphenylacetate degradation; pyruvate and succinate semialdehyde from 4-hydroxyphenylacetate: step 7/7. In terms of biological role, catalyzes the reversible retro-aldol cleavage of 4-hydroxy-2-ketoheptane-1,7-dioate (HKHD) to pyruvate and succinic semialdehyde. The sequence is that of 4-hydroxy-2-oxo-heptane-1,7-dioate aldolase from Salmonella typhimurium (strain LT2 / SGSC1412 / ATCC 700720).